A 584-amino-acid polypeptide reads, in one-letter code: 2-succinyl-5-enolpyruvyl-6-hydroxy-3-cyclohexene-1-carboxylate synthase (584 aa).

This sequence belongs to the TPP enzyme family. MenD subfamily. Homodimer. Mg(2+) serves as cofactor. Mn(2+) is required as a cofactor. The cofactor is thiamine diphosphate.

The enzyme catalyses isochorismate + 2-oxoglutarate + H(+) = 5-enolpyruvoyl-6-hydroxy-2-succinyl-cyclohex-3-ene-1-carboxylate + CO2. Its pathway is quinol/quinone metabolism; 1,4-dihydroxy-2-naphthoate biosynthesis; 1,4-dihydroxy-2-naphthoate from chorismate: step 2/7. It participates in quinol/quinone metabolism; menaquinone biosynthesis. Its function is as follows. Catalyzes the thiamine diphosphate-dependent decarboxylation of 2-oxoglutarate and the subsequent addition of the resulting succinic semialdehyde-thiamine pyrophosphate anion to isochorismate to yield 2-succinyl-5-enolpyruvyl-6-hydroxy-3-cyclohexene-1-carboxylate (SEPHCHC). This is 2-succinyl-5-enolpyruvyl-6-hydroxy-3-cyclohexene-1-carboxylate synthase from Bacillus cereus (strain ATCC 14579 / DSM 31 / CCUG 7414 / JCM 2152 / NBRC 15305 / NCIMB 9373 / NCTC 2599 / NRRL B-3711).